We begin with the raw amino-acid sequence, 324 residues long: Quinolinate synthase 2 (324 aa).

Iminosuccinate-binding residues include His-48 and Ser-66. Position 111 (Cys-111) interacts with [4Fe-4S] cluster. Iminosuccinate is bound by residues Tyr-137–Asn-139 and Ser-154. Cys-196 serves as a coordination point for [4Fe-4S] cluster. Residues His-222–Glu-224 and Thr-239 contribute to the iminosuccinate site. Cys-282 provides a ligand contact to [4Fe-4S] cluster.

The protein belongs to the quinolinate synthase family. Type 2 subfamily. [4Fe-4S] cluster is required as a cofactor.

The protein localises to the cytoplasm. It carries out the reaction iminosuccinate + dihydroxyacetone phosphate = quinolinate + phosphate + 2 H2O + H(+). It participates in cofactor biosynthesis; NAD(+) biosynthesis; quinolinate from iminoaspartate: step 1/1. Its function is as follows. Catalyzes the condensation of iminoaspartate with dihydroxyacetone phosphate to form quinolinate. This is Quinolinate synthase 2 from Mesorhizobium japonicum (strain LMG 29417 / CECT 9101 / MAFF 303099) (Mesorhizobium loti (strain MAFF 303099)).